The chain runs to 362 residues: Aminomethyltransferase (362 aa).

This sequence belongs to the GcvT family. The glycine cleavage system is composed of four proteins: P, T, L and H.

The catalysed reaction is N(6)-[(R)-S(8)-aminomethyldihydrolipoyl]-L-lysyl-[protein] + (6S)-5,6,7,8-tetrahydrofolate = N(6)-[(R)-dihydrolipoyl]-L-lysyl-[protein] + (6R)-5,10-methylene-5,6,7,8-tetrahydrofolate + NH4(+). Its function is as follows. The glycine cleavage system catalyzes the degradation of glycine. The polypeptide is Aminomethyltransferase (Listeria welshimeri serovar 6b (strain ATCC 35897 / DSM 20650 / CCUG 15529 / CIP 8149 / NCTC 11857 / SLCC 5334 / V8)).